The chain runs to 362 residues: Peptide chain release factor 1 (362 aa).

Q237 bears the N5-methylglutamine mark.

Belongs to the prokaryotic/mitochondrial release factor family. In terms of processing, methylated by PrmC. Methylation increases the termination efficiency of RF1.

It is found in the cytoplasm. Functionally, peptide chain release factor 1 directs the termination of translation in response to the peptide chain termination codons UAG and UAA. This Legionella pneumophila (strain Corby) protein is Peptide chain release factor 1.